The chain runs to 318 residues: L-lactate dehydrogenase (318 aa).

NAD(+) is bound by residues Val18, Asp39, Lys44, Tyr69, and 83 to 84; that span reads GA. Substrate-binding residues include Gln86 and Arg92. NAD(+) is bound by residues Ser105, 122–124, and Ser147; that span reads VSN. 124–127 serves as a coordination point for substrate; it reads NPVD. 152–155 lines the substrate pocket; sequence DTSR. His179 serves as the catalytic Proton acceptor. A Phosphotyrosine modification is found at Tyr225. Thr234 provides a ligand contact to substrate.

The protein belongs to the LDH/MDH superfamily. LDH family. Homotetramer.

The protein localises to the cytoplasm. The enzyme catalyses (S)-lactate + NAD(+) = pyruvate + NADH + H(+). It functions in the pathway fermentation; pyruvate fermentation to lactate; (S)-lactate from pyruvate: step 1/1. Functionally, catalyzes the conversion of lactate to pyruvate. This Clostridium botulinum (strain Okra / Type B1) protein is L-lactate dehydrogenase.